A 60-amino-acid polypeptide reads, in one-letter code: Cytotoxin 6 (60 aa).

Disulfide bonds link Cys-3–Cys-21, Cys-14–Cys-38, Cys-42–Cys-53, and Cys-54–Cys-59.

The protein belongs to the three-finger toxin family. Short-chain subfamily. Type IA cytotoxin sub-subfamily. As to quaternary structure, monomer in solution; Homodimer and oligomer in the presence of negatively charged lipids forming a pore with a size ranging between 20 and 30 Angstroms. In terms of tissue distribution, expressed by the venom gland.

It is found in the secreted. Its subcellular location is the target cell membrane. Its function is as follows. Shows cytolytic activity on many different cells by forming pore in lipid membranes. In vivo, increases heart rate or kills the animal by cardiac arrest. In addition, it binds to heparin with high affinity, interacts with Kv channel-interacting protein 1 (KCNIP1) in a calcium-independent manner, and binds to integrin alpha-V/beta-3 (ITGAV/ITGB3) with moderate affinity. The chain is Cytotoxin 6 from Naja annulifera (Banded Egyptian cobra).